Reading from the N-terminus, the 378-residue chain is Ribosomal RNA large subunit methyltransferase G (378 aa).

This sequence belongs to the methyltransferase superfamily. RlmG family.

It is found in the cytoplasm. It catalyses the reaction guanosine(1835) in 23S rRNA + S-adenosyl-L-methionine = N(2)-methylguanosine(1835) in 23S rRNA + S-adenosyl-L-homocysteine + H(+). In terms of biological role, specifically methylates the guanine in position 1835 (m2G1835) of 23S rRNA. In Escherichia coli O6:K15:H31 (strain 536 / UPEC), this protein is Ribosomal RNA large subunit methyltransferase G.